Here is a 543-residue protein sequence, read N- to C-terminus: MKQTKYIFVTGGVLSSLGKGIAAASIATLLKNSGLKASILKADPYINVDPGTMSPFEHGEVFVTDDGAETDLDLGHYERFLDESLSQDNNFTTGRVYQSVIEKERRGEYLGKTIQVIPHIVGEIKDRIKKAGEGKDILIVEIGGTVGDIEGLPFLEAIRALRLEVGKNNAMNIHLTLVPFIKAAGELKTKPTQHSVGELRRIGISPDMIICRSEKALDRDLKDKIAISCGVEKNCVIESVDAASIYQIPLNFLKQDILNPIAEILDLKNLKPNMENWDSLVKRVIAPSNEVKIAFVGKYVDLKESYKSLTEAIIHAGAALDTKVELKWVDSEKLENMESAEVFKDVSGILVAGGFGYRGVEGKIKAIQYARENKIPFLGICLGMQLALVEFARNVLKLKDANSSEFDEKCENPVVYLIDEFMDTNGEKQIRTAKTPLGGTMRLGAYKCDIKEKSLLAKVYNEAKSVKERHRHRYEANPKYRVDFEKHGLIVSGESKGLIEAVELNCHPFFLAVQFHPEFTSRLEHVNPVICGFIKAAINYEDN.

The segment at 1-267 (MKQTKYIFVT…LNPIAEILDL (267 aa)) is amidoligase domain. Serine 15 contacts CTP. Residue serine 15 coordinates UTP. Residues 16–21 (SLGKGI) and aspartate 73 contribute to the ATP site. Positions 73 and 141 each coordinate Mg(2+). Residues 148–150 (DIE), 188–193 (KTKPTQ), and lysine 224 each bind CTP. UTP contacts are provided by residues 188–193 (KTKPTQ) and lysine 224. Residues 292–543 (KIAFVGKYVD…IKAAINYEDN (252 aa)) enclose the Glutamine amidotransferase type-1 domain. Residue glycine 354 participates in L-glutamine binding. Cysteine 381 functions as the Nucleophile; for glutamine hydrolysis in the catalytic mechanism. Residues 382-385 (LGMQ), glutamate 405, and arginine 473 each bind L-glutamine. Catalysis depends on residues histidine 516 and glutamate 518.

The protein belongs to the CTP synthase family. As to quaternary structure, homotetramer.

It carries out the reaction UTP + L-glutamine + ATP + H2O = CTP + L-glutamate + ADP + phosphate + 2 H(+). The enzyme catalyses L-glutamine + H2O = L-glutamate + NH4(+). The catalysed reaction is UTP + NH4(+) + ATP = CTP + ADP + phosphate + 2 H(+). It participates in pyrimidine metabolism; CTP biosynthesis via de novo pathway; CTP from UDP: step 2/2. Its activity is regulated as follows. Allosterically activated by GTP, when glutamine is the substrate; GTP has no effect on the reaction when ammonia is the substrate. The allosteric effector GTP functions by stabilizing the protein conformation that binds the tetrahedral intermediate(s) formed during glutamine hydrolysis. Inhibited by the product CTP, via allosteric rather than competitive inhibition. Functionally, catalyzes the ATP-dependent amination of UTP to CTP with either L-glutamine or ammonia as the source of nitrogen. Regulates intracellular CTP levels through interactions with the four ribonucleotide triphosphates. The protein is CTP synthase of Campylobacter jejuni subsp. doylei (strain ATCC BAA-1458 / RM4099 / 269.97).